The chain runs to 146 residues: Hemoglobin subunit beta (146 aa).

At Val1 the chain carries N-acetylvaline. Positions 2–146 (HLTADEKTAV…VANALAHKYH (145 aa)) constitute a Globin domain. Phosphothreonine is present on Thr12. Residue Ser44 is modified to Phosphoserine. The residue at position 59 (Lys59) is an N6-acetyllysine. His63 serves as a coordination point for heme b. Position 82 is an N6-acetyllysine (Lys82). His92 serves as a coordination point for heme b. Cys93 is modified (S-nitrosocysteine). Lys144 carries the N6-acetyllysine modification.

Belongs to the globin family. As to quaternary structure, heterotetramer of two alpha chains and two beta chains. Red blood cells.

Involved in oxygen transport from the lung to the various peripheral tissues. In Procyon lotor (Raccoon), this protein is Hemoglobin subunit beta (HBB).